The following is a 394-amino-acid chain: THAP domain-containing protein 5 (394 aa).

Residues 1 to 84 form a THAP-type zinc finger; the sequence is MPRYCAAICC…LKQTAIPTIF (84 aa). The disordered stretch occupies residues 86 to 109; it reads LPEDNQEKDPSKKKSQKKKLKSEK. Residues 320–323 carry the HCFC1-binding motif (HBM) motif; sequence EHSY. Positions 347-381 form a coiled coil; sequence LELQEQQTLGRLKSLEALIRQLKQENWLSEENVKI.

As to quaternary structure, interacts with HTRA2; under apoptotic conditions. Interacts with ABRAXAS2. In terms of processing, cleaved by HTRA2 during apoptosis.

The protein resides in the nucleus. Its function is as follows. Has sequence-specific DNA-binding activity and can function as transcriptional repressor (in vitro). May be a regulator of cell cycle: THAP5 overexpression in human cell lines causes cell cycle arrest at G2/M phase. This Bos taurus (Bovine) protein is THAP domain-containing protein 5 (THAP5).